A 58-amino-acid polypeptide reads, in one-letter code: uncharacterized protein (58 aa).

Residues 12–32 (VMTLLITISILIVLAVLLVTI) form a helical membrane-spanning segment.

It is found in the cell membrane. This is an uncharacterized protein from Bacillus subtilis (strain 168).